The following is a 156-amino-acid chain: Small ribosomal subunit protein uS7 (156 aa).

This sequence belongs to the universal ribosomal protein uS7 family. In terms of assembly, part of the 30S ribosomal subunit. Contacts proteins S9 and S11.

In terms of biological role, one of the primary rRNA binding proteins, it binds directly to 16S rRNA where it nucleates assembly of the head domain of the 30S subunit. Is located at the subunit interface close to the decoding center, probably blocks exit of the E-site tRNA. This Mycoplasmopsis synoviae (strain 53) (Mycoplasma synoviae) protein is Small ribosomal subunit protein uS7.